The following is a 239-amino-acid chain: Proteasome activator complex subunit 2 (239 aa).

At A2 the chain carries N-acetylalanine. S10 is modified (phosphoserine). Positions 65–86 (DIPIPDPPPKDDEMETDKQEKK) are disordered. Over residues 72–86 (PPKDDEMETDKQEKK) the composition is skewed to basic and acidic residues.

This sequence belongs to the PA28 family. In terms of assembly, heterodimer of PSME1 and PSME2, which forms a hexameric ring.

In terms of biological role, implicated in immunoproteasome assembly and required for efficient antigen processing. The PA28 activator complex enhances the generation of class I binding peptides by altering the cleavage pattern of the proteasome. In Sus scrofa (Pig), this protein is Proteasome activator complex subunit 2 (PSME2).